The following is a 361-amino-acid chain: 4-hydroxytryptamine kinase (361 aa).

ATP contacts are provided by residues asparagine 37, lysine 57, and 118–120 (QDV). Aspartate 224 is a catalytic residue. Position 248–250 (248–250 (DWE)) interacts with ATP.

The protein belongs to the methylthioribose kinase family. Monomer. Mg(2+) is required as a cofactor.

The catalysed reaction is 4-hydroxytryptamine + ATP = norbaeocystin + ADP + H(+). It carries out the reaction psilocin + ATP = psilocybin + ADP + H(+). The enzyme catalyses 4-hydroxy-N,N,N-trimethyltryptamine + ATP = aeruginascin + ADP + H(+). The protein operates within secondary metabolite biosynthesis. 4-hydroxytryptamine kinase; part of the gene cluster that mediates the biosynthesis of psilocybin, a psychotropic tryptamine-derived natural product. The first step in the pathway is the decarboxylation of L-tryptophan to tryptamine by the decarboxylase psiD. PsiD does not decarboxylate phenylalanine, tyrosine, or 5-hydroxy- L -tryptophan (5-HTP). 4-hydroxy-L-tryptophan is accepted as substrate by psiD as well. The cytochrome P450 monooxygenase psiH then converts tryptamine to 4-hydroxytryptamine. The kinase psiK catalyzes the 4-O-phosphorylation step by converting 4-hydroxytryptamine into norbaeocystin. The methyltransferase psiM then catalyzes iterative methyl transfer to the amino group of norbaeocystin to yield psilocybin via a monomethylated intermediate, baeocystin. 4-hydroxy-6-methyl-l-tryptophancan also be converted the decarboxylase PsiD, kinase PsiK, and methyltransferase PsiM into respectively 6-methyl-norbaeocystin, 6-methylbaeocystin, and 6-methylpsilocybin. PsiK kinase can also turn psilocin into psilocybin. This activity may represent a protective mechanism to rephosphorylate the unstable psilocin to the stable psilocybin in case of intracellular ester cleavage. Moreover, psiK is able to O-phosphorylate the quaternary amine 4-hydroxy-N,N,N-trimethyltryptamine (4-OH-TMT) to yield aeruginascin, another bioactive compound found in Psilocybe species. The chain is 4-hydroxytryptamine kinase from Psilocybe cyanescens.